The primary structure comprises 306 residues: uncharacterized protein (306 aa).

The stretch at 277-306 (TEIIQNYKIANELKKEKQQNKKKNSIELEE) forms a coiled coil.

This is an uncharacterized protein from Saccharolobus islandicus (Sulfolobus islandicus).